The following is a 180-amino-acid chain: tRNA (cytidine(56)-2'-O)-methyltransferase (180 aa).

S-adenosyl-L-methionine contacts are provided by residues L85, 114 to 118 (GAEKV), and 132 to 139 (VGNQPHSE).

Belongs to the aTrm56 family. In terms of assembly, homodimer.

It is found in the cytoplasm. The catalysed reaction is cytidine(56) in tRNA + S-adenosyl-L-methionine = 2'-O-methylcytidine(56) in tRNA + S-adenosyl-L-homocysteine + H(+). Specifically catalyzes the AdoMet-dependent 2'-O-ribose methylation of cytidine at position 56 in tRNAs. In Thermococcus kodakarensis (strain ATCC BAA-918 / JCM 12380 / KOD1) (Pyrococcus kodakaraensis (strain KOD1)), this protein is tRNA (cytidine(56)-2'-O)-methyltransferase.